A 297-amino-acid chain; its full sequence is Ribosomal protein L11 methyltransferase (297 aa).

Thr-152, Gly-173, Asp-195, and Asn-234 together coordinate S-adenosyl-L-methionine.

This sequence belongs to the methyltransferase superfamily. PrmA family.

Its subcellular location is the cytoplasm. The catalysed reaction is L-lysyl-[protein] + 3 S-adenosyl-L-methionine = N(6),N(6),N(6)-trimethyl-L-lysyl-[protein] + 3 S-adenosyl-L-homocysteine + 3 H(+). Methylates ribosomal protein L11. This Cupriavidus taiwanensis (strain DSM 17343 / BCRC 17206 / CCUG 44338 / CIP 107171 / LMG 19424 / R1) (Ralstonia taiwanensis (strain LMG 19424)) protein is Ribosomal protein L11 methyltransferase.